The following is a 265-amino-acid chain: Eukaryotic translation initiation factor 3 subunit J (265 aa).

Residues 24 to 34 (AGDEPILDSWD) are compositionally biased toward acidic residues. The disordered stretch occupies residues 24 to 74 (AGDEPILDSWDEEPKAKKEAAKPKPKPKAGGKKNAKGEEKKEQVLAIDELD). The segment covering 35-45 (EEPKAKKEAAK) has biased composition (basic and acidic residues). The span at 46–57 (PKPKPKAGGKKN) shows a compositional bias: basic residues. Coiled-coil stretches lie at residues 78-106 (RKEL…MAEE) and 190-220 (IENI…ARVK).

It belongs to the eIF-3 subunit J family. In terms of assembly, component of the eukaryotic translation initiation factor 3 (eIF-3) complex.

It localises to the cytoplasm. Component of the eukaryotic translation initiation factor 3 (eIF-3) complex, which is involved in protein synthesis of a specialized repertoire of mRNAs and, together with other initiation factors, stimulates binding of mRNA and methionyl-tRNAi to the 40S ribosome. The eIF-3 complex specifically targets and initiates translation of a subset of mRNAs involved in cell proliferation. This chain is Eukaryotic translation initiation factor 3 subunit J, found in Candida glabrata (strain ATCC 2001 / BCRC 20586 / JCM 3761 / NBRC 0622 / NRRL Y-65 / CBS 138) (Yeast).